An 891-amino-acid chain; its full sequence is Protein translocase subunit SecA 1 (891 aa).

ATP is bound by residues Gln85, 103 to 107, and Asp491; that span reads GEGKT. Residues Cys877, Cys879, Cys888, and Cys889 each coordinate Zn(2+).

Belongs to the SecA family. Monomer and homodimer. Part of the essential Sec protein translocation apparatus which comprises SecA, SecYEG and auxiliary proteins SecDF. Other proteins may also be involved. Zn(2+) is required as a cofactor.

It localises to the cell membrane. The protein resides in the cytoplasm. The catalysed reaction is ATP + H2O + cellular proteinSide 1 = ADP + phosphate + cellular proteinSide 2.. Its function is as follows. Part of the Sec protein translocase complex. Interacts with the SecYEG preprotein conducting channel. Has a central role in coupling the hydrolysis of ATP to the transfer of proteins into and across the cell membrane, serving as an ATP-driven molecular motor driving the stepwise translocation of polypeptide chains across the membrane. This chain is Protein translocase subunit SecA 1, found in Clostridioides difficile (strain 630) (Peptoclostridium difficile).